Reading from the N-terminus, the 323-residue chain is Lipid A biosynthesis acyltransferase 1 (323 aa).

Residues 23–43 (YWGAWLGVAAMAGIALTPPKF) form a helical membrane-spanning segment. Positions 139-144 (HGWAVD) match the HXXXXD motif motif.

It belongs to the LpxL/LpxM/LpxP family. LpxM subfamily.

It is found in the cell inner membrane. The enzyme catalyses an alpha-Kdo-(2-&gt;4)-alpha-Kdo-(2-&gt;6)-(acyl)-lipid IVA + a fatty acyl-[ACP] = an alpha-Kdo-(2-&gt;4)-alpha-Kdo-(2-&gt;6)-lipid A + holo-[ACP]. It functions in the pathway glycolipid biosynthesis; KDO(2)-lipid A biosynthesis; KDO(2)-lipid A from CMP-3-deoxy-D-manno-octulosonate and lipid IV(A): step 4/4. Its pathway is bacterial outer membrane biogenesis; lipopolysaccharide biosynthesis. In terms of biological role, catalyzes the transfer of an acyl chain from an acyl-[acyl-carrier-protein] (ACP) to a Kdo(2)-(acyl)-lipid IV(A) to form a Kdo(2)-lipid A. This Shigella flexneri protein is Lipid A biosynthesis acyltransferase 1.